The following is a 185-amino-acid chain: MISVNDFKTGLTISVDNGIWKVLDFQHVKPGKGSAFVRSKLRNLRTGAIQEKTFRGGEKVETALIENRRMQYLYADGDTHVFMDNQTFEQTELPADYLEYELNFLKANMEVQIQSYENETLGVELPKTVELTVTETEPGIKGDTANGATKSATVETGYTLNVPLFVNEGDVLVINTGDGSYISRA.

Belongs to the elongation factor P family.

It localises to the cytoplasm. The protein operates within protein biosynthesis; polypeptide chain elongation. In terms of biological role, involved in peptide bond synthesis. Stimulates efficient translation and peptide-bond synthesis on native or reconstituted 70S ribosomes in vitro. Probably functions indirectly by altering the affinity of the ribosome for aminoacyl-tRNA, thus increasing their reactivity as acceptors for peptidyl transferase. This is Elongation factor P from Staphylococcus saprophyticus subsp. saprophyticus (strain ATCC 15305 / DSM 20229 / NCIMB 8711 / NCTC 7292 / S-41).